The chain runs to 270 residues: Neurotrophic factor BDNF precursor form (270 aa).

An N-terminal signal peptide occupies residues 1-18 (MTILFVTMVISYFSCMRA). Positions 19 to 151 (APMREIPGVQ…AANMSMRVRR (133 aa)) are excised as a propeptide. N-linked (GlcNAc...) asparagine glycosylation occurs at Asn144. 3 cysteine pairs are disulfide-bonded: Cys164-Cys231, Cys209-Cys260, and Cys219-Cys262.

It belongs to the NGF-beta family.

It localises to the secreted. Functionally, promotes the survival of neuronal populations that are all located either in the central nervous system or directly connected to it. The polypeptide is Neurotrophic factor BDNF precursor form (bdnf) (Cyprinus carpio (Common carp)).